The chain runs to 1004 residues: Polyhomeotic-like protein 1 (1004 aa).

The span at 1 to 22 shows a compositional bias: low complexity; it reads METESEQNSNSTNGSSSSGGSS. Disordered regions lie at residues 1 to 24, 212 to 241, 261 to 355, 432 to 512, 556 to 589, and 636 to 672; these read METE…SSRP, NQQA…SSLS, SLNL…NLTR, QQQQ…QLGA, RGMP…PPTL, and TLAV…SPKV. Positions 212–228 are enriched in polar residues; it reads NQQASAQGPQMQGSTQK. A compositionally biased stretch (gly residues) spans 279 to 303; it reads MGPGGGGQAHGGLGQLPSSGMGGGS. 2 stretches are compositionally biased toward polar residues: residues 319 to 329 and 344 to 355; these read QTVTVSQGSQT and SGQQNVGMNLTR. The span at 432–447 shows a compositional bias: low complexity; sequence QQQQQQQQPQATTLTA. Residues 448–458 are compositionally biased toward pro residues; that stretch reads PQPPQVPPTQQ. Residues 459–482 show a composition bias toward low complexity; that stretch reads VPPSQSQQQAQTLVVQPMLQSSPL. Positions 483 to 495 are enriched in pro residues; sequence SLPPDAAPKPPIP. The segment covering 566–583 has biased composition (low complexity); sequence QAHLASSPPSSQAPGALQ. S645 bears the Phosphoserine mark. K763 participates in a covalent cross-link: Glycyl lysine isopeptide (Lys-Gly) (interchain with G-Cter in SUMO2). The FCS-type zinc-finger motif lies at 791-825; it reads LDKKANLLKCEYCGKYAPAEQFRGSKRFCSMTCAK. Residues C800, C803, C819, and C823 each coordinate Zn(2+). A disordered region spans residues 848 to 928; sequence ANYARVRRRG…APPTPELHGI (81 aa). S898 bears the Phosphoserine mark. T922 carries the phosphothreonine modification. The SAM domain maps to 940-1004; it reads WSVEEVYEFI…CAKINVLKET (65 aa).

In terms of assembly, homodimer. Component of a PRC1-like complex. Interacts with RNF2 and CBX7. Interacts with PHC2, PHC2 and BMI1.

The protein resides in the nucleus. Its function is as follows. Component of a Polycomb group (PcG) multiprotein PRC1-like complex, a complex class required to maintain the transcriptionally repressive state of many genes, including Hox genes, throughout development. PcG PRC1 complex acts via chromatin remodeling and modification of histones; it mediates monoubiquitination of histone H2A 'Lys-119', rendering chromatin heritably changed in its expressibility. Required for proper control of cellular levels of GMNN expression. This Homo sapiens (Human) protein is Polyhomeotic-like protein 1 (PHC1).